The sequence spans 258 residues: Serine protease VLSP-3 (258 aa).

The first 18 residues, methionine 1–alanine 18, serve as a signal peptide directing secretion. Residues glutamine 19–leucine 24 constitute a propeptide that is removed on maturation. The Peptidase S1 domain occupies valine 25–alanine 249. Intrachain disulfides connect cysteine 31–cysteine 163, cysteine 50–cysteine 66, cysteine 98–cysteine 256, cysteine 142–cysteine 210, cysteine 174–cysteine 189, and cysteine 200–cysteine 225. Asparagine 44 carries N-linked (GlcNAc...) asparagine glycosylation. Residue histidine 65 is the Charge relay system of the active site. Residues asparagine 79 and asparagine 103 are each glycosylated (N-linked (GlcNAc...) asparagine). Aspartate 110 (charge relay system) is an active-site residue. Asparagine 154 and asparagine 170 each carry an N-linked (GlcNAc...) asparagine glycan. The Charge relay system role is filled by serine 204. A glycan (N-linked (GlcNAc...) asparagine) is linked at asparagine 251.

The protein belongs to the peptidase S1 family. Snake venom subfamily. As to quaternary structure, monomer. As to expression, expressed by the venom gland.

The protein resides in the secreted. Functionally, snake venom serine protease that may act in the hemostasis system of the prey. This chain is Serine protease VLSP-3, found in Macrovipera lebetinus (Levantine viper).